Here is a 523-residue protein sequence, read N- to C-terminus: 3-hydroxybenzoate--CoA/4-hydroxybenzoate--CoA ligase (523 aa).

Belongs to the ATP-dependent AMP-binding enzyme family. Benzoate-CoA ligase subfamily.

The catalysed reaction is 4-hydroxybenzoate + ATP + CoA = 4-hydroxybenzoyl-CoA + AMP + diphosphate. It catalyses the reaction 3-hydroxybenzoate + ATP + CoA = 3-hydroxybenzoyl-CoA + AMP + diphosphate. Catalyzes the ligation of 3-hydroxybenzoate or 4-hydroxybenzoate and CoA at the expense of ATP. The enzyme shows low activity towards benzoate, 4-aminobenzoate, 3-aminobenzoate, 3-fluorobenzoate, 4-fluorobenzoate, 3-chlorobenzoate, and 4-chlorobenzoate. There is no activity with 3,4-dihydroxybenzoate, 2,3-dihydroxybenzoate, and 2-hydroxybenzoate as substrates. The chain is 3-hydroxybenzoate--CoA/4-hydroxybenzoate--CoA ligase (hcl) from Thauera aromatica.